The following is a 175-amino-acid chain: Cuticle protein 16.5, isoform B (175 aa).

19 consecutive repeat copies span residues 17-20 (AAPA), 25-28 (AAPA), 31-34 (AAPA), 38-41 (AAPA), 44-47 (AAPA), 51-54 (AAPA), 57-60 (AAPA), 64-67 (AAPA), 70-73 (AAPA), 77-80 (AAPA), 83-86 (AAPA), 91-94 (AAPA), 99-102 (AAPA), 106-109 (AAPA), 134-137 (AAPA), 144-147 (AAPA), 151-154 (AAPA), 158-161 (AAPA), and 165-168 (AAPA).

In terms of biological role, component of the cuticle of migratory locust which contains more than 100 different structural proteins. This Locusta migratoria (Migratory locust) protein is Cuticle protein 16.5, isoform B.